A 376-amino-acid polypeptide reads, in one-letter code: Endoplasmic reticulum-Golgi intermediate compartment protein 2 (376 aa).

The Cytoplasmic portion of the chain corresponds to 1–33 (MRRLNKKKALNFVRELDAFPKVPESYVETTASG). Residues 34–54 (GTVSLLAFTAMALLAFFEFFV) form a helical membrane-spanning segment. Over 55 to 318 (YRDTWMKYEY…PFWQFLVRLC (264 aa)) the chain is Lumenal. A helical membrane pass occupies residues 319–339 (GIIGGIFSTTGMLHNLVGFCV). The Cytoplasmic portion of the chain corresponds to 340–376 (DVVCCRFKLGVYKPKSMSDFDGQINSLTPLLSENAEQ).

It belongs to the ERGIC family.

It localises to the endoplasmic reticulum-Golgi intermediate compartment membrane. The protein resides in the golgi apparatus. The protein localises to the cis-Golgi network membrane. It is found in the endoplasmic reticulum membrane. Possible role in transport between endoplasmic reticulum and Golgi. The protein is Endoplasmic reticulum-Golgi intermediate compartment protein 2 (ergic2) of Danio rerio (Zebrafish).